Reading from the N-terminus, the 1342-residue chain is Receptor tyrosine-protein kinase erbB-3 (1342 aa).

An N-terminal signal peptide occupies residues Met-1 to Gly-19. At Ser-20 to Thr-643 the chain is on the extracellular side. Residues Cys-29 and Cys-56 are joined by a disulfide bond. Residue Asn-126 is glycosylated (N-linked (GlcNAc...) asparagine). Disulfide bonds link Cys-156–Cys-183, Cys-186–Cys-194, Cys-190–Cys-202, Cys-210–Cys-218, Cys-214–Cys-226, Cys-227–Cys-235, Cys-231–Cys-243, Cys-246–Cys-255, Cys-259–Cys-286, Cys-290–Cys-301, Cys-305–Cys-320, and Cys-323–Cys-327. A glycan (N-linked (GlcNAc...) asparagine) is linked at Asn-250. N-linked (GlcNAc...) asparagine glycosylation is found at Asn-353, Asn-408, Asn-414, Asn-437, and Asn-469. Cystine bridges form between Cys-500–Cys-509, Cys-504–Cys-517, Cys-520–Cys-529, Cys-533–Cys-549, Cys-552–Cys-565, Cys-556–Cys-573, Cys-576–Cys-585, Cys-589–Cys-610, Cys-613–Cys-621, and Cys-617–Cys-629. Asn-522 carries N-linked (GlcNAc...) asparagine glycosylation. Asn-566 carries an N-linked (GlcNAc...) asparagine glycan. Asn-616 is a glycosylation site (N-linked (GlcNAc...) asparagine). A helical transmembrane segment spans residues Met-644–Leu-664. Over Tyr-665–Thr-1342 the chain is Cytoplasmic. Ser-686 bears the Phosphoserine mark. The Protein kinase domain occupies Leu-709–Thr-966. ATP is bound by residues Leu-715–Val-723, Lys-742, Gln-788–Leu-790, and Asn-834–Asn-839. Asn-834 serves as the catalytic Proton acceptor. 2 disordered regions span residues Arg-980–Lys-999 and Leu-1033–Glu-1152. Ser-982 is subject to Phosphoserine. Positions Arg-1042 to Ser-1075 are enriched in polar residues.

It belongs to the protein kinase superfamily. Tyr protein kinase family. EGF receptor subfamily. In terms of assembly, monomer and homodimer. Heterodimer with each of the other ERBB receptors (Potential). Interacts with CSPG5. Interacts with GRB7. Interacts with MUC1. Interacts with MYOC. Interacts with isoform 2 of PA2G4. Found in a ternary complex with NRG1 and ITGAV:ITGB3 or ITGA6:ITGB4. Autophosphorylated. Ligand-binding increases phosphorylation on tyrosine residues and promotes its association with the p85 subunit of phosphatidylinositol 3-kinase. As to expression, epithelial tissues and brain.

The protein resides in the cell membrane. Its subcellular location is the secreted. The enzyme catalyses L-tyrosyl-[protein] + ATP = O-phospho-L-tyrosyl-[protein] + ADP + H(+). Functionally, tyrosine-protein kinase that plays an essential role as cell surface receptor for neuregulins. Binds to neuregulin-1 (NRG1) and is activated by it; ligand-binding increases phosphorylation on tyrosine residues and promotes its association with the p85 subunit of phosphatidylinositol 3-kinase. May also be activated by CSPG5. Involved in the regulation of myeloid cell differentiation. The protein is Receptor tyrosine-protein kinase erbB-3 (ERBB3) of Homo sapiens (Human).